Consider the following 299-residue polypeptide: Very long chain fatty acid elongase 5 (299 aa).

Methionine 1 is modified (N-acetylmethionine). 7 consecutive transmembrane segments (helical) span residues tryptophan 26–valine 46, isoleucine 64–valine 84, valine 112–leucine 132, isoleucine 139–methionine 158, phenylalanine 168–serine 187, glycine 205–cysteine 225, and phenylalanine 227–threonine 247. Positions valine 274–aspartate 299 are disordered. Residues glycine 279–asparagine 289 show a composition bias toward polar residues.

The protein belongs to the ELO family. ELOVL5 subfamily. Interacts with TECR.

It is found in the endoplasmic reticulum membrane. Its subcellular location is the cell projection. The protein resides in the dendrite. The catalysed reaction is a very-long-chain acyl-CoA + malonyl-CoA + H(+) = a very-long-chain 3-oxoacyl-CoA + CO2 + CoA. The enzyme catalyses (6Z,9Z,12Z)-octadecatrienoyl-CoA + malonyl-CoA + H(+) = (8Z,11Z,14Z)-3-oxoeicosatrienoyl-CoA + CO2 + CoA. It carries out the reaction (9Z,12Z,15Z)-octadecatrienoyl-CoA + malonyl-CoA + H(+) = (11Z,14Z,17Z)-3-oxoeicosatrienoyl-CoA + CO2 + CoA. It catalyses the reaction (9Z)-hexadecenoyl-CoA + malonyl-CoA + H(+) = 3-oxo-(11Z)-octadecenoyl-CoA + CO2 + CoA. The catalysed reaction is (9Z)-octadecenoyl-CoA + malonyl-CoA + H(+) = 3-oxo-(11Z)-eicosenoyl-CoA + CO2 + CoA. The enzyme catalyses (11Z)-octadecenoyl-CoA + malonyl-CoA + H(+) = 3-oxo-(13Z)-eicosenoyl-CoA + CO2 + CoA. It carries out the reaction (9Z,12Z)-octadecadienoyl-CoA + malonyl-CoA + H(+) = (11Z,14Z)-3-oxoicosa-11,14-dienoyl-CoA + CO2 + CoA. It catalyses the reaction (6Z,9Z,12Z,15Z)-octadecatetraenoyl-CoA + malonyl-CoA + H(+) = (8Z,11Z,14Z,17Z)-3-oxoicosatetraenoyl-CoA + CO2 + CoA. The catalysed reaction is (5Z,8Z,11Z,14Z)-eicosatetraenoyl-CoA + malonyl-CoA + H(+) = (7Z,10Z,13Z,16Z)-3-oxodocosatetraenoyl-CoA + CO2 + CoA. The enzyme catalyses (5Z,8Z,11Z,14Z,17Z)-eicosapentaenoyl-CoA + malonyl-CoA + H(+) = 3-oxo-(7Z,10Z,13Z,16Z,19Z)-docosapentaenoyl-CoA + CO2 + CoA. It participates in lipid metabolism; polyunsaturated fatty acid biosynthesis. Functionally, catalyzes the first and rate-limiting reaction of the four reactions that constitute the long-chain fatty acids elongation cycle. This endoplasmic reticulum-bound enzymatic process allows the addition of 2 carbons to the chain of long- and very long-chain fatty acids (VLCFAs) per cycle. Condensing enzyme that acts specifically toward polyunsaturated acyl-CoA with the higher activity toward C18:3(n-6) acyl-CoA. May participate in the production of monounsaturated and of polyunsaturated VLCFAs of different chain lengths that are involved in multiple biological processes as precursors of membrane lipids and lipid mediators. In conditions where the essential linoleic and alpha linoleic fatty acids are lacking it is also involved in the synthesis of Mead acid from oleic acid. The polypeptide is Very long chain fatty acid elongase 5 (Mus musculus (Mouse)).